Reading from the N-terminus, the 299-residue chain is NAD-dependent protein deacetylase 1 (299 aa).

Positions 15–292 (LPPGTTDLAP…TTVADRLGLR (278 aa)) constitute a Deacetylase sirtuin-type domain. Residues 39–59 (GAGI…GSLS) and 117–120 (QNVD) contribute to the NAD(+) site. Residue H135 is the Proton acceptor of the active site. Residues C143, C146, C194, and C197 each coordinate Zn(2+). NAD(+) is bound by residues 234–236 (GSS) and L278.

This sequence belongs to the sirtuin family. Class II subfamily. Requires Zn(2+) as cofactor.

The protein resides in the cytoplasm. The enzyme catalyses N(6)-acetyl-L-lysyl-[protein] + NAD(+) + H2O = 2''-O-acetyl-ADP-D-ribose + nicotinamide + L-lysyl-[protein]. In terms of biological role, NAD-dependent protein deacetylase which modulates the activities of several enzymes which are inactive in their acetylated form. This chain is NAD-dependent protein deacetylase 1, found in Streptomyces coelicolor (strain ATCC BAA-471 / A3(2) / M145).